Consider the following 502-residue polypeptide: Cytochrome P450 71B20 (502 aa).

A helical transmembrane segment spans residues 1-21 (MAISFLCFCLITLASLIFFAK). Cys444 is a binding site for heme.

The protein belongs to the cytochrome P450 family. Heme is required as a cofactor.

The protein localises to the membrane. In Arabidopsis thaliana (Mouse-ear cress), this protein is Cytochrome P450 71B20 (CYP71B20).